The following is a 451-amino-acid chain: Prenyltransferase asqH1 (451 aa).

Residues 14–37 (AEDQSTRKVHWGQEGSGQSPEARP) form a disordered region. Residue E120 participates in L-tryptophan binding. The substrate site is built by R137, R274, K276, Y278, and Y373.

The protein belongs to the tryptophan dimethylallyltransferase family.

The catalysed reaction is quinolinone B + dimethylallyl diphosphate = peniprequinolone + diphosphate. Its pathway is secondary metabolite biosynthesis. It participates in alkaloid biosynthesis. The protein operates within mycotoxin biosynthesis. Functionally, prenyltransferase; part of the gene cluster that mediates the biosynthesis of the aspoquinolone mycotoxins. Within the pathway, the prenyltransferase asqH1 catalyzes the canonical Friedel-Crafts alkylation of quinolinone B with dimethylallyl cation to yield dimethylallyl quinolone. The first step of the pathway is catalyzed by the nonribosomal peptide synthetase asqK that condenses anthranilic acid and O-methyl-L-tyrosine to produce 4'-methoxycyclopeptin. 4'-methoxycyclopeptin is then converted to 4'-methoxydehydrocyclopeptin by the ketoglutarate-dependent dioxygenase asqJ. AsqJ also converts its first product 4'-methoxydehydrocyclopeptin to 4'-methoxycyclopenin. The following conversion of 4'-methoxycyclopenin into 4'-methoxyviridicatin is catalyzed by the cyclopenase asqI. 4'-methoxyviridicatin is the precursor of quinolone natural products, and is further converted to quinolinone B. The prenyltransferase asqH1 then catalyzes the canonical Friedel-Crafts alkylation of quinolinone B with dimethylallyl cation to yield dimethylallyl quinolone, which is subjected to FAD-dependent dehydrogenation by the FAD-linked oxidoreductase asqF to yield conjugated aryl diene. The delta(3') double bond then serves as the site of the second alkylation with DMAPP catalyzed by the prenyltransferase asqH2 to yield a carbenium ion intermediate, which can be attacked by H(2)O to yield a styrenyl quinolone containing a C3'-hydroxyprenyl chain. The FAD-dependent monooxygenase asqG performs epoxidation of the terminal C7'-C8' olefin. Finally, after dehydratation of the epoxide at C3 by asqC, the quinolone epoxide rearrangement protein asqO catalyzes an enzymatic 3-exo-tet cyclization to yield the cyclopropyl-THF ring system in aspoquinolone. The polypeptide is Prenyltransferase asqH1 (Emericella nidulans (strain FGSC A4 / ATCC 38163 / CBS 112.46 / NRRL 194 / M139) (Aspergillus nidulans)).